The primary structure comprises 491 residues: Aspartyl/glutamyl-tRNA(Asn/Gln) amidotransferase subunit B (491 aa).

The protein belongs to the GatB/GatE family. GatB subfamily. As to quaternary structure, heterotrimer of A, B and C subunits.

The enzyme catalyses L-glutamyl-tRNA(Gln) + L-glutamine + ATP + H2O = L-glutaminyl-tRNA(Gln) + L-glutamate + ADP + phosphate + H(+). It catalyses the reaction L-aspartyl-tRNA(Asn) + L-glutamine + ATP + H2O = L-asparaginyl-tRNA(Asn) + L-glutamate + ADP + phosphate + 2 H(+). Functionally, allows the formation of correctly charged Asn-tRNA(Asn) or Gln-tRNA(Gln) through the transamidation of misacylated Asp-tRNA(Asn) or Glu-tRNA(Gln) in organisms which lack either or both of asparaginyl-tRNA or glutaminyl-tRNA synthetases. The reaction takes place in the presence of glutamine and ATP through an activated phospho-Asp-tRNA(Asn) or phospho-Glu-tRNA(Gln). The sequence is that of Aspartyl/glutamyl-tRNA(Asn/Gln) amidotransferase subunit B from Parasynechococcus marenigrum (strain WH8102).